The primary structure comprises 120 residues: UPF0102 protein Moth_0988 (120 aa).

Belongs to the UPF0102 family.

This chain is UPF0102 protein Moth_0988, found in Moorella thermoacetica (strain ATCC 39073 / JCM 9320).